The sequence spans 473 residues: Gamma-aminobutyric acid receptor subunit beta-3 (473 aa).

An N-terminal signal peptide occupies residues 1–25 (MWGFAGGRLFGIFSAPVLVAVVCCA). The Extracellular segment spans residues 26–246 (QSVNDPGNMS…FRLKRNIGYF (221 aa)). 2 N-linked (GlcNAc...) asparagine glycosylation sites follow: N33 and N105. Residue Y122 participates in histamine binding. C161 and C175 are oxidised to a cystine. N174 carries N-linked (GlcNAc...) asparagine glycosylation. Residues E180, Y182, and T227 each coordinate 4-aminobutanoate. Histamine-binding positions include 181–182 (SY) and T227. A helical membrane pass occupies residues 247 to 267 (ILQTYMPSILITILSWVSFWI). At 268 to 271 (NYDA) the chain is on the cytoplasmic side. Residues 272–292 (SAARVALGITTVLTMTTINTH) traverse the membrane as a helical segment. Topologically, residues 293–304 (LRETLPKIPYVK) are extracellular. A helical membrane pass occupies residues 305-328 (AIDMYLMGCFVFVFLALLEYAFVN). Topologically, residues 329–447 (YIFFGRGPQR…KIPDLTDVNA (119 aa)) are cytoplasmic. The helical transmembrane segment at 448–470 (IDRWSRIVFPFTFSLFNLVYWLY) threads the bilayer. At 471–473 (YVN) the chain is on the extracellular side.

Belongs to the ligand-gated ion channel (TC 1.A.9) family. Gamma-aminobutyric acid receptor (TC 1.A.9.5) subfamily. GABRB3 sub-subfamily. As to quaternary structure, heteropentamer, formed by a combination of alpha (GABRA1-6), beta (GABRB1-3), gamma (GABRG1-3), delta (GABRD), epsilon (GABRE), rho (GABRR1-3), pi (GABRP) and theta (GABRQ) chains, each subunit exhibiting distinct physiological and pharmacological properties. Can form functional homopentamers (in vitro). Interacts with UBQLN1. May interact with KIF21B. Identified in a complex of 720 kDa composed of LHFPL4, NLGN2, GABRA1, GABRB2, GABRG2 and GABRB3. Interacts with LHFPL4. Interacts with GIT1; this interaction is required for synaptic GABRB3 surface stability and inhibitory synapse strength.

It localises to the postsynaptic cell membrane. Its subcellular location is the cell membrane. The protein localises to the cytoplasmic vesicle membrane. The enzyme catalyses chloride(in) = chloride(out). Potentiated by histamine. Beta subunit of the heteropentameric ligand-gated chloride channel gated by gamma-aminobutyric acid (GABA), a major inhibitory neurotransmitter in the brain. GABA-gated chloride channels, also named GABA(A) receptors (GABAAR), consist of five subunits arranged around a central pore and contain GABA active binding site(s) located at the alpha and beta subunit interface(s). GABAARs containing beta-3/GABRB3 subunit are found at both synaptic and extrasynaptic sites. When activated by GABA, GABAARs selectively allow the flow of chloride anions across the cell membrane down their electrochemical gradient. Chloride influx into the postsynaptic neuron following GABAAR opening decreases the neuron ability to generate a new action potential, thereby reducing nerve transmission. GABAARs containing alpha-1 and beta-3 subunits exhibit synaptogenic activity; the gamma-2 subunit being necessary but not sufficient to induce rapid synaptic contacts formation. Extrasynaptic beta-3 receptors contribute to the tonic GABAergic inhibition. GABAARs containing alpha-1, beta-3 and epsilon subunits may permit spontaneous chloride channel activity while preserving the structural information required for GABA-gated openings. Beta-containing GABAARs can simultaneously bind GABA and histamine where histamine binds at the interface of two neighboring beta subunits, which may be involved in the regulation of sleep and wakefulness. Plays an important role in somatosensation and in the production of antinociception. The chain is Gamma-aminobutyric acid receptor subunit beta-3 from Mus musculus (Mouse).